The primary structure comprises 149 residues: Deoxyuridine 5'-triphosphate nucleotidohydrolase (149 aa).

Substrate-binding positions include arginine 68–glycine 70, asparagine 81, leucine 85–aspartate 87, and methionine 95.

It belongs to the dUTPase family. Mg(2+) serves as cofactor.

It catalyses the reaction dUTP + H2O = dUMP + diphosphate + H(+). The protein operates within pyrimidine metabolism; dUMP biosynthesis; dUMP from dCTP (dUTP route): step 2/2. Functionally, this enzyme is involved in nucleotide metabolism: it produces dUMP, the immediate precursor of thymidine nucleotides and it decreases the intracellular concentration of dUTP so that uracil cannot be incorporated into DNA. This is Deoxyuridine 5'-triphosphate nucleotidohydrolase from Herminiimonas arsenicoxydans.